A 1523-amino-acid polypeptide reads, in one-letter code: Rho GTPase-activating protein gacHH (1523 aa).

3 Kelch repeats span residues 30-76, 83-133, and 135-184; these read DIVI…YGHS, KMFV…LIYD, and YILI…DISP. Polar residues-rich tracts occupy residues 161–173 and 184–194; these read NSWT…SSTG and PRSSTTTPTHQ. The segment at 161 to 256 is disordered; that stretch reads NSWTKPSSNS…GGSPMTTPPT (96 aa). The span at 195 to 211 shows a compositional bias: low complexity; the sequence is SVNGSNSNSSSSSRVRS. Polar residues predominate over residues 212–221; it reads ATISSHNNSP. Positions 227 to 244 are enriched in low complexity; sequence NNNNNNNNNSNNSNNSNN. 3 Kelch repeats span residues 335 to 384, 386 to 441, and 443 to 496; these read KAFI…AIGS, LFIF…PISS, and ILII…PITS. Disordered regions lie at residues 510–569, 609–631, and 647–671; these read LPHL…DNIN, QSID…VSND, and NKNN…NSGS. The span at 615-626 shows a compositional bias: gly residues; sequence GGSGGGSGGGNG. Positions 690–729 form a coiled coil; the sequence is CIKKYNSLKDSYLELKQKYQEEREKRLELEKELERYRLSS. A disordered region spans residues 748–786; sequence NINSNNSTTTTTTTTTTTTTPIPLSTSNNNNNNNNNSTL. Residues 812-840 are a coiled coil; it reads YEKRVKWKENTEKEANQQLEVIKSKIDLF. Disordered stretches follow at residues 861–881, 905–927, 963–991, 1006–1096, and 1143–1194; these read SENI…QNPQ, LTPR…PIPL, TPQK…SKST, SGHF…RLGK, and NGAN…SERI. A compositionally biased stretch (low complexity) spans 870-881; that stretch reads QQQQQQQQQNPQ. Over residues 905 to 915 the composition is skewed to basic and acidic residues; sequence LTPRKSRENSV. Low complexity-rich tracts occupy residues 971–981, 1012–1030, 1043–1079, and 1143–1153; these read PQQQQQQQPPQ, SSSN…FSNN, QHQQ…LQTQ, and NGANNLGGLVL. Residues 1151 to 1228 are a coiled coil; the sequence is LVLTSDKEKE…KKHKKIKGLF (78 aa). A compositionally biased stretch (basic and acidic residues) spans 1155 to 1194; sequence SDKEKEKLEKEREKSERIEREKQEKEREKLEKEREKSERI. Positions 1233 to 1411 constitute a Rho-GAP domain; that stretch reads SNKESLPFRR…TFIEDFHYIF (179 aa). A disordered region spans residues 1425–1482; it reads DDDYDSSSFGSNNTPSSHSPHSSSPTLNPAVTTTTTTTTTTNTTTTTNTTTTPTSATI. Residues 1430–1476 show a composition bias toward low complexity; sequence SSSFGSNNTPSSHSPHSSSPTLNPAVTTTTTTTTTTNTTTTTNTTTT.

The protein localises to the cytoplasm. In terms of biological role, rho GTPase-activating protein involved in the signal transduction pathway. The chain is Rho GTPase-activating protein gacHH (gacHH) from Dictyostelium discoideum (Social amoeba).